The primary structure comprises 118 residues: Large ribosomal subunit protein bL20 (118 aa).

It belongs to the bacterial ribosomal protein bL20 family.

In terms of biological role, binds directly to 23S ribosomal RNA and is necessary for the in vitro assembly process of the 50S ribosomal subunit. It is not involved in the protein synthesizing functions of that subunit. This chain is Large ribosomal subunit protein bL20, found in Sulfurimonas denitrificans (strain ATCC 33889 / DSM 1251) (Thiomicrospira denitrificans (strain ATCC 33889 / DSM 1251)).